Consider the following 190-residue polypeptide: CASP-like protein 2U2 (190 aa).

The Cytoplasmic segment spans residues 1 to 10; sequence MGEKMQGFQG. A helical membrane pass occupies residues 11 to 31; it reads WSIGIRFLTSCVSIASLILLL. Over 32–59 the chain is Extracellular; it reads KSKQTVQVSVGLDYVTQQVKYSDTSAFV. A helical transmembrane segment spans residues 60-80; the sequence is YLVFSDILVAVYCIVVLVGLI. At 81–94 the chain is on the cytoplasmic side; that stretch reads PAALGKSHPGKAGQ. A helical transmembrane segment spans residues 95–115; it reads WAIFIFDQVLAYVLLAAASSA. The Extracellular segment spans residues 116–144; the sequence is TEVAYLADKGMAKTSWEAVCPRFAHFCHT. Residues 145 to 165 form a helical membrane-spanning segment; sequence VMASISLSFVAVLLLALLAVV. Residues 166-190 are Cytoplasmic-facing; it reads SASGLFGRFYRRPLFAVKMRHNTLI.

The protein belongs to the Casparian strip membrane proteins (CASP) family. Homodimer and heterodimers.

The protein resides in the cell membrane. In Pteridium aquilinum subsp. aquilinum (Bracken fern), this protein is CASP-like protein 2U2.